Here is a 356-residue protein sequence, read N- to C-terminus: UDP-N-acetylglucosamine--N-acetylmuramyl-(pentapeptide) pyrophosphoryl-undecaprenol N-acetylglucosamine transferase (356 aa).

UDP-N-acetyl-alpha-D-glucosamine-binding positions include T12 to G14, N124, R163, S188, I242, A261 to E266, and Q287.

It belongs to the glycosyltransferase 28 family. MurG subfamily.

Its subcellular location is the cell inner membrane. The catalysed reaction is di-trans,octa-cis-undecaprenyl diphospho-N-acetyl-alpha-D-muramoyl-L-alanyl-D-glutamyl-meso-2,6-diaminopimeloyl-D-alanyl-D-alanine + UDP-N-acetyl-alpha-D-glucosamine = di-trans,octa-cis-undecaprenyl diphospho-[N-acetyl-alpha-D-glucosaminyl-(1-&gt;4)]-N-acetyl-alpha-D-muramoyl-L-alanyl-D-glutamyl-meso-2,6-diaminopimeloyl-D-alanyl-D-alanine + UDP + H(+). Its pathway is cell wall biogenesis; peptidoglycan biosynthesis. Its function is as follows. Cell wall formation. Catalyzes the transfer of a GlcNAc subunit on undecaprenyl-pyrophosphoryl-MurNAc-pentapeptide (lipid intermediate I) to form undecaprenyl-pyrophosphoryl-MurNAc-(pentapeptide)GlcNAc (lipid intermediate II). The protein is UDP-N-acetylglucosamine--N-acetylmuramyl-(pentapeptide) pyrophosphoryl-undecaprenol N-acetylglucosamine transferase of Stutzerimonas stutzeri (strain A1501) (Pseudomonas stutzeri).